Consider the following 236-residue polypeptide: Small ribosomal subunit protein uS2c (236 aa).

It belongs to the universal ribosomal protein uS2 family.

It is found in the plastid. Its subcellular location is the chloroplast. The chain is Small ribosomal subunit protein uS2c (rps2) from Pisum sativum (Garden pea).